A 512-amino-acid polypeptide reads, in one-letter code: Cytochrome P450 26B1 (512 aa).

A heme-binding site is contributed by cysteine 441.

The protein belongs to the cytochrome P450 family. The cofactor is heme.

It localises to the endoplasmic reticulum membrane. Its subcellular location is the microsome membrane. The enzyme catalyses all-trans-retinoate + reduced [NADPH--hemoprotein reductase] + O2 = all-trans-4-hydroxyretinoate + oxidized [NADPH--hemoprotein reductase] + H2O + H(+). The catalysed reaction is all-trans-retinoate + reduced [NADPH--hemoprotein reductase] + O2 = all-trans-18-hydroxyretinoate + oxidized [NADPH--hemoprotein reductase] + H2O + H(+). In terms of biological role, a cytochrome P450 monooxygenase involved in the metabolism of retinoates (RAs), the active metabolites of vitamin A, and critical signaling molecules in animals. RAs exist as at least four different isomers: all-trans-RA (atRA), 9-cis-RA, 13-cis-RA, and 9,13-dicis-RA, where atRA is considered to be the biologically active isomer, although 9-cis-RA and 13-cis-RA also have activity. Catalyzes the hydroxylation of atRA primarily at C-4 and C-18, thereby contributing to the regulation of atRA homeostasis and signaling. Hydroxylation of atRA limits its biological activity and initiates a degradative process leading to its eventual elimination. Involved in the convertion of atRA to all-trans-4-oxo-RA. Can oxidize all-trans-13,14-dihydroretinoate (DRA) to metabolites which could include all-trans-4-oxo-DRA, all-trans-4-hydroxy-DRA, all-trans-5,8-epoxy-DRA, and all-trans-18-hydroxy-DRA. Shows preference for the following substrates: atRA &gt; 9-cis-RA &gt; 13-cis-RA. Plays a central role in germ cell development: acts by degrading RAs in the developing testis, preventing STRA8 expression, thereby leading to delay of meiosis. Required for the maintenance of the undifferentiated state of male germ cells during embryonic development in Sertoli cells, inducing arrest in G0 phase of the cell cycle and preventing meiotic entry. Plays a role in skeletal development, both at the level of patterning and in the ossification of bone and the establishment of some synovial joints. Essential for postnatal survival. Functionally, also has a significant activity in oxidation of tazarotenic acid and may therefore metabolize that xenobiotic in vivo. This chain is Cytochrome P450 26B1 (CYP26B1), found in Bos taurus (Bovine).